Consider the following 961-residue polypeptide: Outer capsid protein VP2 (961 aa).

The protein belongs to the orbivirus VP2 family.

The protein localises to the virion. In terms of biological role, the VP2 protein is one of the two proteins (with VP5) which constitute the virus particle outer capsid. It is the major target of the host immunogenic response. Responsible for viral attachment to target host cell, probably by binding to sialic acid. This attachment induces virion internalization predominantly through clathrin-dependent endocytosis. The sequence is that of Outer capsid protein VP2 (Segment-2) from Bluetongue virus 1 (isolate South Africa vaccine) (BTV 1).